We begin with the raw amino-acid sequence, 993 residues long: DNA-binding protein SMUBP-2 (993 aa).

A2 bears the N-acetylalanine mark. Residues G214–T221, Q403, Y442, and E571 contribute to the ATP site. The tract at residues T638 to R785 is SS DNA-binding. Disordered regions lie at residues Y651–Q723, V782–P828, and V841–T879. 2 stretches are compositionally biased toward polar residues: residues H653–A662 and P669–E681. In terms of domain architecture, R3H spans Q723–A786. Basic and acidic residues predominate over residues P818 to P828. Over residues R842–Q859 the composition is skewed to polar residues. Residues K864–K868 carry the Nuclear localization signal motif. The segment at V891–A940 adopts an AN1-type zinc-finger fold. Residues C897, C902, C913, C916, C921, H924, H930, and C932 each contribute to the Zn(2+) site. Positions R971–T993 are disordered.

It belongs to the DNA2/NAM7 helicase family. Homooligomer. Interacts with RUVBL1. Interacts with RUVBL2. Interacts with GTF3C1. Interacts with ABT1. Interacts with ribosomes. Expressed in all tissues examined. Expressed in the developing and adult human brain, with highest expression in the cerebellum. Moderately expressed in fibroblasts.

It is found in the nucleus. Its subcellular location is the cytoplasm. It localises to the cell projection. The protein resides in the axon. It carries out the reaction ATP + H2O = ADP + phosphate + H(+). In terms of biological role, 5' to 3' helicase that unwinds RNA and DNA duplexes in an ATP-dependent reaction. Specific to 5'-phosphorylated single-stranded guanine-rich sequences. May play a role in RNA metabolism, ribosome biogenesis or initiation of translation. May play a role in regulation of transcription. Interacts with tRNA-Tyr. In Homo sapiens (Human), this protein is DNA-binding protein SMUBP-2 (IGHMBP2).